A 244-amino-acid chain; its full sequence is 5-oxoprolinase subunit A (244 aa).

It belongs to the LamB/PxpA family. As to quaternary structure, forms a complex composed of PxpA, PxpB and PxpC.

It carries out the reaction 5-oxo-L-proline + ATP + 2 H2O = L-glutamate + ADP + phosphate + H(+). Functionally, catalyzes the cleavage of 5-oxoproline to form L-glutamate coupled to the hydrolysis of ATP to ADP and inorganic phosphate. The chain is 5-oxoprolinase subunit A from Shigella flexneri.